The chain runs to 130 residues: Small ribosomal subunit protein uS9 (130 aa).

The protein belongs to the universal ribosomal protein uS9 family.

The chain is Small ribosomal subunit protein uS9 from Streptococcus equi subsp. equi (strain 4047).